The chain runs to 102 residues: Large ribosomal subunit protein bL21 (102 aa).

It belongs to the bacterial ribosomal protein bL21 family. As to quaternary structure, part of the 50S ribosomal subunit. Contacts protein L20.

This protein binds to 23S rRNA in the presence of protein L20. The protein is Large ribosomal subunit protein bL21 of Agathobacter rectalis (strain ATCC 33656 / DSM 3377 / JCM 17463 / KCTC 5835 / VPI 0990) (Eubacterium rectale).